Consider the following 86-residue polypeptide: Weak neurotoxin 5 (86 aa).

Positions 1–21 (MKTLLLTLVVVTIVCLDLGYT) are cleaved as a signal peptide. 5 cysteine pairs are disulfide-bonded: Cys-24–Cys-45, Cys-27–Cys-32, Cys-38–Cys-63, Cys-67–Cys-78, and Cys-79–Cys-84.

It belongs to the three-finger toxin family. Ancestral subfamily. Orphan group II sub-subfamily. As to expression, expressed by the venom gland.

It is found in the secreted. Its function is as follows. Binds with low affinity to muscular and very low affinity to neuronal (alpha-7/CHRNA7) nicotinic acetylcholine receptor (nAChR). The protein is Weak neurotoxin 5 of Naja sputatrix (Malayan spitting cobra).